The following is a 725-amino-acid chain: Ribonuclease R (725 aa).

Residues 236 to 559 enclose the RNB domain; the sequence is RKDLRDKLII…QLHRLIKQMV (324 aa). Residues 611 to 689 enclose the S1 motif domain; that stretch reads GKSLKAQIVS…NLGKVDVVLE (79 aa).

The protein belongs to the RNR ribonuclease family. RNase R subfamily.

The protein resides in the cytoplasm. It catalyses the reaction Exonucleolytic cleavage in the 3'- to 5'-direction to yield nucleoside 5'-phosphates.. Functionally, 3'-5' exoribonuclease that releases 5'-nucleoside monophosphates and is involved in maturation of structured RNAs. This chain is Ribonuclease R, found in Mycoplasmopsis pulmonis (strain UAB CTIP) (Mycoplasma pulmonis).